Reading from the N-terminus, the 842-residue chain is TATA box-binding protein-associated factor, RNA polymerase I, subunit C (842 aa).

3 disordered regions span residues 574 to 605, 667 to 690, and 702 to 842; these read SSLR…PSWT, RPGD…QQDE, and QAAA…RMGF. A compositionally biased stretch (basic and acidic residues) spans 577 to 588; that stretch reads REPDHPAPERPA. Over residues 745-760 the composition is skewed to polar residues; the sequence is DASSAPHSQDLSNSEA. Basic and acidic residues predominate over residues 783–794; sequence QHERRQTLRDYM. Threonine 808 carries the phosphothreonine modification. The span at 809-826 shows a compositional bias: low complexity; that stretch reads PPSQTSSRQTRSFRQQTP. Residues 833 to 842 show a composition bias toward basic residues; sequence PPRKKPRMGF.

As to quaternary structure, component of the transcription factor SL1/TIF-IB complex, composed of TBP and at least TAF1A, TAF1B, TAF1C and TAF1D. In the complex interacts directly with TBP, TAF1A and TAF1B. Interaction of the SL1/TIF-IB subunits with TBP excludes interaction of TBP with the transcription factor IID (TFIID) subunits. Interacts with MYC and RRN3. Interacts with p53/TP53; the interaction prevents the association of SL1/TIF-IB with UBTF and represses RNA polymerase I transcription. Part of Pol I pre-initiation complex (PIC), in which Pol I core assembles with RRN3 and promoter-bound UTBF and SL1/TIF-IB complex.

It is found in the nucleus. Its subcellular location is the nucleolus. Its function is as follows. Component of the transcription factor SL1/TIF-IB complex, which is involved in the assembly of the PIC (pre-initiation complex) during RNA polymerase I-dependent transcription. The rate of PIC formation probably is primarily dependent on the rate of association of SL1/TIF-IB with the rDNA promoter. SL1/TIF-IB is involved in stabilization of nucleolar transcription factor 1/UBTF on rDNA. Formation of SL1/TIF-IB excludes the association of TBP with TFIID subunits. Recruits RNA polymerase I to the rRNA gene promoter via interaction with RRN3. In Rattus norvegicus (Rat), this protein is TATA box-binding protein-associated factor, RNA polymerase I, subunit C (Taf1c).